Reading from the N-terminus, the 782-residue chain is Formin-like protein 9 (782 aa).

The N-terminal stretch at 1 to 24 (MQNFWFAIFFFLLTCAPPSPLSYA) is a signal peptide. The helical transmembrane segment at 102–122 (LLLPALSAVLVIATVIGLALF) threads the bilayer. 3 disordered regions span residues 191 to 223 (DSPE…EEEE), 264 to 287 (MSPP…RLRV), and 387 to 407 (SSSQ…PPLV). A compositionally biased stretch (acidic residues) spans 214–223 (EVNEEDEEEE). Residues 396–407 (ALPPPTRPPPLV) show a composition bias toward pro residues. Residues 406–782 (LVPPSQPFVV…LDQVCKEMGD (377 aa)) enclose the FH2 domain.

Belongs to the formin-like family. Class-I subfamily.

The protein resides in the membrane. Might be involved in the organization and polarity of the actin cytoskeleton. The sequence is that of Formin-like protein 9 (FH9) from Arabidopsis thaliana (Mouse-ear cress).